The sequence spans 418 residues: UDP-N-acetylglucosamine 1-carboxyvinyltransferase (418 aa).

23-24 (KN) lines the phosphoenolpyruvate pocket. Residue Arg-92 participates in UDP-N-acetyl-alpha-D-glucosamine binding. Cys-116 acts as the Proton donor in catalysis. A 2-(S-cysteinyl)pyruvic acid O-phosphothioketal modification is found at Cys-116. UDP-N-acetyl-alpha-D-glucosamine is bound by residues 121–125 (RPVDL), 161–164 (KVSV), Asp-306, and Ile-328.

It belongs to the EPSP synthase family. MurA subfamily.

It localises to the cytoplasm. It carries out the reaction phosphoenolpyruvate + UDP-N-acetyl-alpha-D-glucosamine = UDP-N-acetyl-3-O-(1-carboxyvinyl)-alpha-D-glucosamine + phosphate. It functions in the pathway cell wall biogenesis; peptidoglycan biosynthesis. Functionally, cell wall formation. Adds enolpyruvyl to UDP-N-acetylglucosamine. The chain is UDP-N-acetylglucosamine 1-carboxyvinyltransferase from Vibrio parahaemolyticus serotype O3:K6 (strain RIMD 2210633).